The following is a 435-amino-acid chain: Arginine/serine-rich coiled-coil protein 2 (435 aa).

The segment covering 1–27 (MAASDTERDGLAPEKTSPDRDKKKEQS) has biased composition (basic and acidic residues). The segment at 1 to 230 (MAASDTERDG…PSPPPFRGRN (230 aa)) is disordered. Alanine 2 bears the N-acetylalanine mark. Serine 4 carries the post-translational modification Phosphoserine. Phosphothreonine occurs at positions 6 and 16. Residues serine 17, serine 30, and serine 32 each carry the phosphoserine modification. The span at 35-51 (ASKHHYSRSRSRSRERK) shows a compositional bias: basic residues. Residues 66–111 (RSKEARRHESKDKSSKKHKSEEHNDKEHSSDKGRERLNSSENGEDR) show a composition bias toward basic and acidic residues. Serine 104 carries the phosphoserine modification. Over residues 112–214 (HKRKERKSSR…KRIEKPRRFS (103 aa)) the composition is skewed to basic residues. The stretch at 230–270 (NTAMDAQEALARRLERAKKLQEQREKEMVEKQKQQEIAAAA) forms a coiled coil. Residue lysine 376 forms a Glycyl lysine isopeptide (Lys-Gly) (interchain with G-Cter in SUMO1); alternate linkage. A Glycyl lysine isopeptide (Lys-Gly) (interchain with G-Cter in SUMO2); alternate cross-link involves residue lysine 376. Serine 377 is modified (phosphoserine).

Belongs to the RSRC2 family.

This is Arginine/serine-rich coiled-coil protein 2 (RSRC2) from Pongo abelii (Sumatran orangutan).